A 103-amino-acid polypeptide reads, in one-letter code: Conantokin-Br (103 aa).

A signal peptide spans methionine 1 to glycine 21. Residues threonine 22–arginine 79 constitute a propeptide that is removed on maturation. The disordered stretch occupies residues arginine 34–leucine 64. The span at serine 55–leucine 64 shows a compositional bias: basic and acidic residues. Residues glutamate 82, glutamate 83, glutamate 89, and glutamate 93 each carry the 4-carboxyglutamate modification. A divalent metal cation is bound by residues glutamate 89 and glutamate 93.

Belongs to the conotoxin B superfamily. It depends on Ca(2+) as a cofactor. Mg(2+) is required as a cofactor. In terms of tissue distribution, expressed by the venom duct.

It is found in the secreted. Conantokins inhibit N-methyl-D-aspartate (NMDA) receptors. This toxin inhibits NR2 subunits N-methyl-D-aspartate (NMDA) receptor-mediated calcium influx in central nervous system neurons in the following order of preference: NR2B/GRIN2B (IC(50)=0.14 uM), NR2D/GRIN2D (IC(50)=0.31 uM), NR2A/GRIN2A (IC(50)=0.68 uM) and NR2C/GRIN2A (IC(50)=4.9 uM), when tested on rat receptors. In Conus sulcatus (Sulcate cone), this protein is Conantokin-Br.